Consider the following 418-residue polypeptide: MSKVDFNKETGPREVFCGLTSIVWLHRRMPDAFFLVVGSRTCAHLIQSAAGVMIFAEPRFGTAILEEKDLAGLADAHEELDRVVNDLISRRPEIKTLFLVGSCPSEVIKLDLATVAEKLNLRFSGQVRFVNYSGSGIETTFTQGEDGALKALIPLMNSTDDEKLLLVGTIANNVEDRFKKIFNSIGINNVESFPPRQSTELPKIGKNTKVILTQPYLSDTVRDLKHRGCEIIYAPFPLGVEGSTKWVLAAAAAFKIPELKVHEVIAPLANRARQALQKHTEILRGKKLFLLPESQLEISLARFLHNECEMELIEVGTPYLNKDLMEEELNLLPDDTKIVEGQHVEKQLDRVRASCPDLVVCGMGLANPLEAEGISTKWSIEMVFSPIHGIDQAADLAELFSRPLTRNQILTSKTLATY.

Positions 17, 42, and 103 each coordinate [4Fe-4S] cluster.

It belongs to the BchN/ChlN family. As to quaternary structure, protochlorophyllide reductase is composed of three subunits; ChlL, ChlN and ChlB. Forms a heterotetramer of two ChlB and two ChlN subunits. [4Fe-4S] cluster serves as cofactor.

It catalyses the reaction chlorophyllide a + oxidized 2[4Fe-4S]-[ferredoxin] + 2 ADP + 2 phosphate = protochlorophyllide a + reduced 2[4Fe-4S]-[ferredoxin] + 2 ATP + 2 H2O. It functions in the pathway porphyrin-containing compound metabolism; chlorophyll biosynthesis (light-independent). Functionally, component of the dark-operative protochlorophyllide reductase (DPOR) that uses Mg-ATP and reduced ferredoxin to reduce ring D of protochlorophyllide (Pchlide) to form chlorophyllide a (Chlide). This reaction is light-independent. The NB-protein (ChlN-ChlB) is the catalytic component of the complex. The sequence is that of Light-independent protochlorophyllide reductase subunit N from Prochlorococcus marinus (strain MIT 9515).